A 297-amino-acid chain; its full sequence is MNKRQSQLKFGNEGISLAVPKQSLQECSYMSNLITDRESTFLSYFVPSKDPKMLPVYRFMFQESADLKHCNHKMQAWRFPNEIEAFNDDGEEYSGQKLLNVLRKEDVYGMVVCVRWYGGQLLGPVRFQHITNTAKQSIDKYKSVLEEERKKQLLRTETGLLRQSSSRSSSLLDQRIRQITAKDKTVNLLRKTLNRPLLHEVDYHGKSLEILDMLLQSRNSMISSLRSELQEKNQKDKKKEVNKLEEKMTNAKEPNVNVPSMKASSAISVETPETIESEASVDHKEASKIIKDVEKEE.

The stretch at L225–N255 forms a coiled coil. 2 stretches are compositionally biased toward basic and acidic residues: residues E228–N250 and S280–E297. Positions E228–E297 are disordered.

It belongs to the IMPACT family.

This is IMPACT family member C14C8.09c from Schizosaccharomyces pombe (strain 972 / ATCC 24843) (Fission yeast).